The chain runs to 30 residues: Cyclotide cycloviolacin O17 (30 aa).

The segment at residues 1–30 (GIPCGESCVWIPCISAAIGCSCKNKVCYRN) is a cross-link (cyclopeptide (Gly-Asn)). 3 cysteine pairs are disulfide-bonded: Cys-4/Cys-20, Cys-8/Cys-22, and Cys-13/Cys-27.

In terms of processing, this is a cyclic peptide.

Functionally, probably participates in a plant defense mechanism. The chain is Cyclotide cycloviolacin O17 from Psychotria brachyceras.